The primary structure comprises 178 residues: MSGGKYVDSEGHLYTVPIREQGNIYKPNNKAMAEEMSEKQVYDAHTKEIDLVNRDPKHLNDDVVKIDFEDVIAEPEGTHSFDGIWKASFTTFTVTKYWFYRLLSALFGIPMALIWGIYFAILSFLHIWAVVPCIKSFLIEIQCISRVYSIYVHTFCDPFFEAVGKIFSNIRINMQKET.

At S2 the chain carries N-acetylserine. The residue at position 2 (S2) is a Phosphoserine. A required for homooligomerization region spans residues 2-94 (SGGKYVDSEG…WKASFTTFTV (93 aa)). The Cytoplasmic segment spans residues 2–104 (SGGKYVDSEG…TKYWFYRLLS (103 aa)). K5 bears the N6-acetyllysine; alternate mark. A Glycyl lysine isopeptide (Lys-Gly) (interchain with G-Cter in ubiquitin); alternate cross-link involves residue K5. Y6 is modified (phosphotyrosine). Position 9 is a phosphoserine (S9). The residue at position 14 (Y14) is a Phosphotyrosine; by ABL1. Y25 is subject to Phosphotyrosine. Residues K26 and K30 each participate in a glycyl lysine isopeptide (Lys-Gly) (interchain with G-Cter in ubiquitin) cross-link. Position 37 is a phosphoserine (S37). Glycyl lysine isopeptide (Lys-Gly) (interchain with G-Cter in ubiquitin) cross-links involve residues K39, K47, and K57. The interval 82 to 94 (DGIWKASFTTFTV) is interaction with CAVIN3. Positions 105–125 (ALFGIPMALIWGIYFAILSFL) form an intramembrane region, helical. Residues 126–178 (HIWAVVPCIKSFLIEIQCISRVYSIYVHTFCDPFFEAVGKIFSNIRINMQKET) are Cytoplasmic-facing. An interacts with SPRY1, SPRY2, SPRY3 and SPRY4 region spans residues 131–142 (VPCIKSFLIEIQ). 3 S-palmitoyl cysteine lipidation sites follow: C133, C143, and C156. Residues 149-160 (SIYVHTFCDPFF) form an interacts with SPRY1, SPRY2, and SPRY4 region. The interacts with SPRY1, SPRY2, SPRY3 and SPRY4 stretch occupies residues 167–178 (FSNIRINMQKET).

This sequence belongs to the caveolin family. Homooligomer. Interacts with BMX, BTK, GLIPR2, NOSTRIN, SNAP25 and STX1A. Interacts with PACSIN2; this interaction induces membrane tubulation. Interacts (via the N-terminus) with DPP4; the interaction is direct. Interacts with SLC7A9. Interacts with CTNNB1, CDH1 and JUP. Interacts with TGFBR1. Interacts with CAVIN3 (via leucine-zipper domain) in a cholesterol-sensitive manner. Interacts with CAVIN1. Interacts with EHD2 in a cholesterol-dependent manner. Forms a ternary complex with UBXN6 and VCP; mediates CAV1 targeting to lysosomes for degradation. Interacts with ABCG1; this interaction regulates ABCG1-mediated cholesterol efflux. Interacts with NEU3; this interaction enhances NEU3 sialidase activity within caveola. Interacts (via C-terminus) with SPRY1, SPRY2 (via C-terminus), SPRY3, and SPRY4. Interacts with IGFBP5; this interaction allows trafficking of IGFBP5 from the plasma membrane to the nucleus. Phosphorylation of isoform Beta on serine residues is constitutive. Phosphorylated at Tyr-14 by ABL1 in response to oxidative stress. Post-translationally, ubiquitinated. Undergo monoubiquitination and multi- and/or polyubiquitination. Monoubiquitination of N-terminal lysines promotes integration in a ternary complex with UBXN6 and VCP which promotes oligomeric CAV1 targeting to lysosomes for degradation. Ubiquitinated by ZNRF1; leading to degradation and modulation of the TLR4-mediated immune response.

Its subcellular location is the golgi apparatus membrane. It localises to the cell membrane. The protein localises to the membrane. It is found in the caveola. The protein resides in the membrane raft. Its subcellular location is the golgi apparatus. It localises to the trans-Golgi network. In terms of biological role, may act as a scaffolding protein within caveolar membranes. Forms a stable heterooligomeric complex with CAV2 that targets to lipid rafts and drives caveolae formation. Mediates the recruitment of CAVIN proteins (CAVIN1/2/3/4) to the caveolae. Interacts directly with G-protein alpha subunits and can functionally regulate their activity. Involved in the costimulatory signal essential for T-cell receptor (TCR)-mediated T-cell activation. Its binding to DPP4 induces T-cell proliferation and NF-kappa-B activation in a T-cell receptor/CD3-dependent manner. Recruits CTNNB1 to caveolar membranes and may regulate CTNNB1-mediated signaling through the Wnt pathway. Negatively regulates TGFB1-mediated activation of SMAD2/3 by mediating the internalization of TGFBR1 from membrane rafts leading to its subsequent degradation. Binds 20(S)-hydroxycholesterol (20(S)-OHC). The polypeptide is Caveolin-1 (CAV1) (Canis lupus familiaris (Dog)).